The sequence spans 182 residues: Ribosome maturation factor RimP (182 aa).

Belongs to the RimP family.

Its subcellular location is the cytoplasm. Functionally, required for maturation of 30S ribosomal subunits. The polypeptide is Ribosome maturation factor RimP (Corynebacterium efficiens (strain DSM 44549 / YS-314 / AJ 12310 / JCM 11189 / NBRC 100395)).